Consider the following 182-residue polypeptide: Large ribosomal subunit protein uL6 (182 aa).

Belongs to the universal ribosomal protein uL6 family. As to quaternary structure, part of the 50S ribosomal subunit.

Functionally, this protein binds to the 23S rRNA, and is important in its secondary structure. It is located near the subunit interface in the base of the L7/L12 stalk, and near the tRNA binding site of the peptidyltransferase center. The protein is Large ribosomal subunit protein uL6 of Dehalococcoides mccartyi (strain CBDB1).